The sequence spans 449 residues: Elongation factor 1-alpha (449 aa).

The tr-type G domain occupies 5–230 (KVHMNLVVVG…DMLEPPVRPS (226 aa)). The G1 stretch occupies residues 14 to 21 (GHVDAGKS). Residue 14–21 (GHVDAGKS) participates in GTP binding. Residues 70–74 (GITID) are G2. The G3 stretch occupies residues 91-94 (DAPG). GTP contacts are provided by residues 91–95 (DAPGH) and 153–156 (NKMD). Residues 153-156 (NKMD) form a G4 region. Residues 194–196 (SGW) form a G5 region. 5-glutamyl glycerylphosphorylethanolamine is present on glutamate 362.

The protein belongs to the TRAFAC class translation factor GTPase superfamily. Classic translation factor GTPase family. EF-Tu/EF-1A subfamily. Phosphatidylethanolamine (PE) is a direct precursor of the ethanolamine-phosphoglycerol (EPG) moiety.

It localises to the cytoplasm. In terms of biological role, this protein promotes the GTP-dependent binding of aminoacyl-tRNA to the A-site of ribosomes during protein biosynthesis. The polypeptide is Elongation factor 1-alpha (TEF1) (Trypanosoma brucei brucei).